A 188-amino-acid polypeptide reads, in one-letter code: Putative pre-16S rRNA nuclease (188 aa).

Residues 144–188 are disordered; the sequence is HAPGRVVAGPKGRRKARHRGQGGTGTEQQADAGGRARPHATEGKG. Basic residues predominate over residues 154-163; it reads KGRRKARHRG.

This sequence belongs to the YqgF nuclease family.

Its subcellular location is the cytoplasm. In terms of biological role, could be a nuclease involved in processing of the 5'-end of pre-16S rRNA. This chain is Putative pre-16S rRNA nuclease, found in Kineococcus radiotolerans (strain ATCC BAA-149 / DSM 14245 / SRS30216).